The chain runs to 229 residues: ATP-dependent dethiobiotin synthetase BioD (229 aa).

ATP is bound at residue 12–17 (GVGKTV). Position 16 (threonine 16) interacts with Mg(2+). Lysine 37 is an active-site residue. Substrate is bound at residue threonine 41. ATP contacts are provided by residues aspartate 53, 112 to 115 (EGAG), and 201 to 203 (PAG). 2 residues coordinate Mg(2+): aspartate 53 and glutamate 112.

The protein belongs to the dethiobiotin synthetase family. In terms of assembly, homodimer. It depends on Mg(2+) as a cofactor.

It is found in the cytoplasm. The catalysed reaction is (7R,8S)-7,8-diammoniononanoate + CO2 + ATP = (4R,5S)-dethiobiotin + ADP + phosphate + 3 H(+). It participates in cofactor biosynthesis; biotin biosynthesis; biotin from 7,8-diaminononanoate: step 1/2. Its function is as follows. Catalyzes a mechanistically unusual reaction, the ATP-dependent insertion of CO2 between the N7 and N8 nitrogen atoms of 7,8-diaminopelargonic acid (DAPA, also called 7,8-diammoniononanoate) to form a ureido ring. The polypeptide is ATP-dependent dethiobiotin synthetase BioD (Mycobacterium sp. (strain JLS)).